The primary structure comprises 151 residues: Cytochrome c-type biogenesis protein CcmE (151 aa).

Residues 1-8 (MNPQRKKR) lie on the Cytoplasmic side of the membrane. Residues 9–29 (LFLILGLLAGVAVAVGFALSA) traverse the membrane as a helical; Signal-anchor for type II membrane protein segment. The Periplasmic segment spans residues 30-151 (LQQNINLFYT…QAASGAEAKP (122 aa)). The heme site is built by histidine 124 and tyrosine 128.

It belongs to the CcmE/CycJ family.

The protein localises to the cell inner membrane. Heme chaperone required for the biogenesis of c-type cytochromes. Transiently binds heme delivered by CcmC and transfers the heme to apo-cytochromes in a process facilitated by CcmF and CcmH. The protein is Cytochrome c-type biogenesis protein CcmE of Pseudomonas putida (strain W619).